The sequence spans 76 residues: Theta defensin subunit C (76 aa).

A signal peptide spans 1-22; sequence MRTFAFLTAMLLLVALHAQAEA. Positions 23 to 64 are excised as a propeptide; that stretch reads RQARADEAAIQEQPGADDQGMAHSFTRNESAVLPLSESERGL. Residue Arg65 forms a Cyclopeptide (Arg-Cys) (interchain with C-73 in subunit A); in form BTD-4 linkage. Cys68 and Cys73 form a disulfide bridge. Residue Cys73 forms a Cyclopeptide (Cys-Arg) (interchain with R-65 in subunit A); in form BTD-4 linkage. Positions 74-76 are excised as a propeptide; it reads RLL.

This sequence belongs to the alpha-defensin family. Theta subfamily. As to quaternary structure, BTD-4 is a cyclic heterodimer composed of subunits A and C; disulfide-linked. In terms of processing, forms a cyclic peptide with subunit A (BTD-4). An additional intersubunit disulfide bond is formed.

BTD-4 has antimicrobial activity against the Gram-negative bacterium E.coli ML35, the Gram-positive bacterium S.aureus 502a, and the fungus C.albicans 16820. This is Theta defensin subunit C (BTDC) from Papio anubis (Olive baboon).